The sequence spans 98 residues: Large ribosomal subunit protein uL23c (98 aa).

It belongs to the universal ribosomal protein uL23 family. In terms of assembly, part of the 50S ribosomal subunit.

The protein localises to the plastid. Its subcellular location is the chloroplast. Its function is as follows. Binds to 23S rRNA. In Thalassiosira pseudonana (Marine diatom), this protein is Large ribosomal subunit protein uL23c (rpl23).